We begin with the raw amino-acid sequence, 158 residues long: Small ribosomal subunit protein uS7 (158 aa).

This sequence belongs to the universal ribosomal protein uS7 family. In terms of assembly, part of the 30S ribosomal subunit. Contacts proteins S9 and S11.

Functionally, one of the primary rRNA binding proteins, it binds directly to 16S rRNA where it nucleates assembly of the head domain of the 30S subunit. Is located at the subunit interface close to the decoding center, probably blocks exit of the E-site tRNA. The chain is Small ribosomal subunit protein uS7 from Gluconobacter oxydans (strain 621H) (Gluconobacter suboxydans).